The chain runs to 522 residues: Sensory neuron membrane protein 2 (522 aa).

Over 1–7 (MLGKHTK) the chain is Cytoplasmic. Residues 8-28 (LFFGVSLVALIVSVILAAWGF) form a helical membrane-spanning segment. Topologically, residues 29–469 (PKIVSKQIQK…QSHTLLGYVE (441 aa)) are extracellular. N-linked (GlcNAc...) asparagine glycans are attached at residues Asn44, Asn67, Asn104, Asn166, Asn191, Asn228, Asn272, Asn314, and Asn343. 3 cysteine pairs are disulfide-bonded: Cys268–Cys338, Cys299–Cys362, and Cys340–Cys351. The chain crosses the membrane as a helical span at residues 470–490 (AVRWALLAIAIVATAISAIAV). The Cytoplasmic segment spans residues 491-522 (ARSGLIPVWPRNANSVSFILSPHPNSDVNKVH).

This sequence belongs to the CD36 family. Detected in both male and female antennal tissues. Expression is two to three fold higher in male compared to female antenna. Detected at low levels in all body tissues except the female abdomen.

It is found in the cell membrane. In terms of biological role, plays an olfactory role that is not restricted to pheromone sensitivity. This Ostrinia furnacalis (Asian corn borer) protein is Sensory neuron membrane protein 2.